The sequence spans 410 residues: Sporulation killing factor maturation protein SkfB (410 aa).

Residues 103 to 314 form the Radical SAM core domain; that stretch reads SYLPISCTLQ…LREARHKWGD (212 aa). C117, C121, C124, C380, C385, and C387 together coordinate [4Fe-4S] cluster.

This sequence belongs to the radical SAM superfamily. [4Fe-4S] cluster is required as a cofactor.

Its subcellular location is the cytoplasm. Its function is as follows. Catalyzes the formation of the thioether bond required for production of the sporulation killing factor (SKF) from SkfA. Forms the cysteine-methionine thioether bond found in SKF; the acceptor amino acid can be hydrophobic, aromatic or a small hydrophilic amino acid but not a larger hydrophilic amino acid, i.e. Met=Ala, Phe, Leu, Tyr&gt;Asn, Ser&gt;&gt;Gln, Glu, Lys. The relative position of Cys and Met in the substrate cannot be inverted, in vitro the thioether bond cannot be made in the absence of the SkfA propeptide, suggesting this is the first reaction in SKF maturation. In vitro, in the absence of a second substrate, cleaves S-adenosyl-L-methionine into Met and 5'-dA. The sequence is that of Sporulation killing factor maturation protein SkfB from Bacillus subtilis (strain 168).